Reading from the N-terminus, the 459-residue chain is Bifunctional protein GlmU (459 aa).

The tract at residues 1-230 (MSNRFAVILA…FDETLGVNDR (230 aa)) is pyrophosphorylase. UDP-N-acetyl-alpha-D-glucosamine contacts are provided by residues 9-12 (LAAG), K23, Q73, and 78-79 (GT). D103 is a Mg(2+) binding site. 4 residues coordinate UDP-N-acetyl-alpha-D-glucosamine: G140, E155, N170, and N228. Position 228 (N228) interacts with Mg(2+). The segment at 231–251 (VALSQAEIIMKNRINRKNMVN) is linker. The interval 252 to 459 (GVTIIDPSNT…VDQLLNKKKS (208 aa)) is N-acetyltransferase. UDP-N-acetyl-alpha-D-glucosamine is bound by residues R333 and K351. The active-site Proton acceptor is the H363. UDP-N-acetyl-alpha-D-glucosamine-binding residues include Y366 and N377. Residues 386–387 (NY), A423, and R440 contribute to the acetyl-CoA site.

This sequence in the N-terminal section; belongs to the N-acetylglucosamine-1-phosphate uridyltransferase family. It in the C-terminal section; belongs to the transferase hexapeptide repeat family. Homotrimer. Mg(2+) is required as a cofactor.

Its subcellular location is the cytoplasm. The catalysed reaction is alpha-D-glucosamine 1-phosphate + acetyl-CoA = N-acetyl-alpha-D-glucosamine 1-phosphate + CoA + H(+). The enzyme catalyses N-acetyl-alpha-D-glucosamine 1-phosphate + UTP + H(+) = UDP-N-acetyl-alpha-D-glucosamine + diphosphate. The protein operates within nucleotide-sugar biosynthesis; UDP-N-acetyl-alpha-D-glucosamine biosynthesis; N-acetyl-alpha-D-glucosamine 1-phosphate from alpha-D-glucosamine 6-phosphate (route II): step 2/2. It participates in nucleotide-sugar biosynthesis; UDP-N-acetyl-alpha-D-glucosamine biosynthesis; UDP-N-acetyl-alpha-D-glucosamine from N-acetyl-alpha-D-glucosamine 1-phosphate: step 1/1. Its pathway is bacterial outer membrane biogenesis; LPS lipid A biosynthesis. Its function is as follows. Catalyzes the last two sequential reactions in the de novo biosynthetic pathway for UDP-N-acetylglucosamine (UDP-GlcNAc). The C-terminal domain catalyzes the transfer of acetyl group from acetyl coenzyme A to glucosamine-1-phosphate (GlcN-1-P) to produce N-acetylglucosamine-1-phosphate (GlcNAc-1-P), which is converted into UDP-GlcNAc by the transfer of uridine 5-monophosphate (from uridine 5-triphosphate), a reaction catalyzed by the N-terminal domain. The sequence is that of Bifunctional protein GlmU from Bacillus thuringiensis subsp. konkukian (strain 97-27).